Consider the following 177-residue polypeptide: Outer membrane lipoprotein Blc (177 aa).

The first 18 residues, 1–18 (MRLLPLVAAATAAFLVVA), serve as a signal peptide directing secretion. The N-palmitoyl cysteine moiety is linked to residue cysteine 19. Cysteine 19 carries S-diacylglycerol cysteine lipidation.

The protein belongs to the calycin superfamily. Lipocalin family. Homodimer.

Its subcellular location is the cell outer membrane. Involved in the storage or transport of lipids necessary for membrane maintenance under stressful conditions. Displays a binding preference for lysophospholipids. The protein is Outer membrane lipoprotein Blc (blc) of Escherichia coli O157:H7.